Reading from the N-terminus, the 564-residue chain is Pachytene checkpoint protein 2 (564 aa).

Position 314–321 (314–321 (GPPGTGKT)) interacts with ATP.

The protein belongs to the AAA ATPase family. PCH2 subfamily.

Its subcellular location is the nucleus. The protein localises to the nucleolus. The protein resides in the chromosome. Its function is as follows. Required for the pachytene checkpoint, the meiotic checkpoint that prevents chromosome segregation when defects in recombination and synaptonemal complex formation occurred. Represses meiotic recombination in the rDNA, probably by excluding the meiosis-specific protein HOP1 from the nucleolar region. In Saccharomyces cerevisiae (strain ATCC 204508 / S288c) (Baker's yeast), this protein is Pachytene checkpoint protein 2 (PCH2).